Reading from the N-terminus, the 1032-residue chain is Toll-like receptor 9 (1032 aa).

The N-terminal stretch at 1-25 (MGPCRGALHPLSLLVQAAALALALA) is a signal peptide. The Extracellular portion of the chain corresponds to 26-815 (QGTLPAFLPC…QDLRLCLDEA (790 aa)). A disulfide bond links Cys-35 and Cys-45. DNA is bound at residue 47–51 (WLFLK). LRR repeat units follow at residues 62–85 (RGNVTSLSLYSNRIHHLHDYDFVH), 87–110 (VHLRRLNLKWNCPPASLSPMHFPC), 122–147 (VPTLEDLNLSYNSITTVPALPSSLVS), 150–166 (LSRTNILVLDPATLAGL), 167–190 (YALRFLFLDGNCYYKNPCQQALQV), 198–221 (LGNLTHLSLKYNNLTVVPRGLPPS), 223–242 (EYLLLSYNHIITLAPEDLAN), 243–268 (LTALRVLDVGGNCRRCDHARNPCREC), 283–306 (LSHLEGLVLRDSSLYSLDPRWFHG), 308–332 (GNLMVLDLSENFLYDCITKTKAFYG), 333–356 (LARLRRLNLSFNYHKKVSFAHLHL), 363–386 (LLSLQELDIHGIFFRSLSKTTLQS), 390–413 (LPMLQRLHLQLNFISQAQLSIFGA), 415–440 (PGLRYVDLSDNRISGAAEPAAATGEV), 472–496 (CRTLNFTLDLSRNNLVTVQPEMFVR), 498–521 (ARLQCLGLSHNSISQAVNGSQFVP), 522–545 (LSNLRVLDLSHNKLDLYHGRSFTE), 547–574 (PRLEALDLSYNSQPFSMRGVGHNLSFVA), 576–600 (LPALRYLSLAHNGIHSRVSQQLRSA), 602–624 (LRALDFSGNTLSQMWAEGDLYLR), 629–652 (LRSLVQLDLSQNRLHTLLPRNLDN), 654–677 (PKSLRLLRLRDNYLAFFNWSSLAL), 678–701 (LPKLEALDLAGNQLKALSNGSLPN), 703–725 (TQLQRLDLSGNSIGFVVPSFFAL), 726–749 (AVRLRELNLSANALKTVEPSWFGS), and 751–774 (AGALKVLDVTANPLHCACGATFVD). N-linked (GlcNAc...) asparagine glycosylation occurs at Asn-64. Residues 72–77 (SNRIHH) and 95–109 (KWNCPPASLSPMHFP) contribute to the DNA site. An intrachain disulfide couples Cys-98 to Cys-110. A glycan (N-linked (GlcNAc...) asparagine) is linked at Asn-129. Residues Tyr-132, Arg-152, and 179–181 (YYK) contribute to the DNA site. An intrachain disulfide couples Cys-178 to Cys-184. N-linked (GlcNAc...) asparagine glycosylation occurs at Asn-200. Tyr-208 lines the DNA pocket. N-linked (GlcNAc...) asparagine glycans are attached at residues Asn-210 and Asn-242. 2 disulfide bridges follow: Cys-255-Cys-268 and Cys-258-Cys-265. Residue Cys-258 is the site of S-palmitoyl cysteine attachment. A DNA-binding site is contributed by Arg-262. Cys-265 carries S-palmitoyl cysteine lipidation. An N-linked (GlcNAc...) asparagine glycan is attached at Asn-340. Cys-472 and Cys-502 are oxidised to a cystine. N-linked (GlcNAc...) asparagine glycosylation is found at Asn-476 and Asn-515. Asn-569 carries N-linked (GlcNAc...) asparagine glycosylation. N-linked (GlcNAc...) asparagine glycans are attached at residues Asn-671, Asn-696, and Asn-701. N-linked (GlcNAc...) asparagine glycosylation is present at Asn-733. 2 disulfide bridges follow: Cys-766–Cys-792 and Cys-768–Cys-811. A helical transmembrane segment spans residues 816 to 836 (LSWVCFSLSLLAVALSLAVPM). Residues 837 to 1032 (LHQLCGWDLW…QNFCRGPTTA (196 aa)) are Cytoplasmic-facing. A TIR domain is found at 868 to 1013 (LAYDAFVVFD…SFWAQLGTAL (146 aa)).

The protein belongs to the Toll-like receptor family. In terms of assembly, monomer and homodimer. Exists as a monomer in the absence of unmethylated cytidine-phosphate-guanosine (CpG) ligand. Proteolytic processing of an insertion loop (Z-loop) is required for homodimerization upon binding to the unmethylated CpG ligand leading to its activation. Interacts with MYD88 via their respective TIR domains. Interacts with BTK. Interacts (via transmembrane domain) with UNC93B1. Interacts with CD300LH; the interaction may promote full activation of TLR9-triggered innate responses. Interacts with CNPY3 and HSP90B1; this interaction is required for proper folding in the endoplasmic reticulum. Interacts with SMPDL3B. Interacts with CD82; this interaction is essential for TLR9-dependent myddosome formation in response to CpG stimulation. Post-translationally, activated by proteolytic cleavage of the flexible loop between repeats LRR14 and LRR15 within the ectodomain. Cleavage requires UNC93B1. Proteolytically processed by first removing the majority of the ectodomain by either asparagine endopeptidase (AEP) or a cathepsin followed by a trimming event that is solely cathepsin mediated and required for optimal receptor signaling. In terms of processing, palmitoylated by ZDHHC3 in the Golgi regulates TLR9 trafficking from the Golgi to endosomes. Depalmitoylation by PPT1 controls the release of TLR9 from UNC93B1 in endosomes.

Its subcellular location is the endoplasmic reticulum membrane. It localises to the endosome. The protein localises to the lysosome. It is found in the cytoplasmic vesicle. The protein resides in the phagosome. Its function is as follows. Key component of innate and adaptive immunity. TLRs (Toll-like receptors) control host immune response against pathogens through recognition of molecular patterns specific to microorganisms. TLR9 is a nucleotide-sensing TLR which is activated by unmethylated cytidine-phosphate-guanosine (CpG) dinucleotides. Acts via MYD88 and TRAF6, leading to NF-kappa-B activation, cytokine secretion and the inflammatory response. Upon CpG stimulation, induces B-cell proliferation, activation, survival and antibody production. The polypeptide is Toll-like receptor 9 (TLR9) (Canis lupus familiaris (Dog)).